Here is a 158-residue protein sequence, read N- to C-terminus: Transcription elongation factor GreA (158 aa).

A coiled-coil region spans residues 47–74; the sequence is AEYHAAKEEQSHNEGRIAELEDKLARAD.

Belongs to the GreA/GreB family.

Its function is as follows. Necessary for efficient RNA polymerase transcription elongation past template-encoded arresting sites. The arresting sites in DNA have the property of trapping a certain fraction of elongating RNA polymerases that pass through, resulting in locked ternary complexes. Cleavage of the nascent transcript by cleavage factors such as GreA or GreB allows the resumption of elongation from the new 3'terminus. GreA releases sequences of 2 to 3 nucleotides. The sequence is that of Transcription elongation factor GreA from Nitrobacter winogradskyi (strain ATCC 25391 / DSM 10237 / CIP 104748 / NCIMB 11846 / Nb-255).